The primary structure comprises 375 residues: tRNA(Met) cytidine acetate ligase (375 aa).

ATP is bound by residues 7 to 20 (VVEYNPFHNGHRYH), G101, N151, and R176.

This sequence belongs to the TmcAL family.

Its subcellular location is the cytoplasm. The catalysed reaction is cytidine(34) in elongator tRNA(Met) + acetate + ATP = N(4)-acetylcytidine(34) in elongator tRNA(Met) + AMP + diphosphate. Functionally, catalyzes the formation of N(4)-acetylcytidine (ac(4)C) at the wobble position of elongator tRNA(Met), using acetate and ATP as substrates. First activates an acetate ion to form acetyladenylate (Ac-AMP) and then transfers the acetyl group to tRNA to form ac(4)C34. This Limosilactobacillus fermentum (strain NBRC 3956 / LMG 18251) (Lactobacillus fermentum) protein is tRNA(Met) cytidine acetate ligase.